The following is a 540-amino-acid chain: Phenylalanine--tRNA ligase beta subunit (540 aa).

The region spanning 266–342 is the B5 domain; sequence LRPEKRTVSV…IAYGYDKIET (77 aa). Residues Asp320, Asp326, Glu329, and Asp330 each coordinate Mg(2+).

This sequence belongs to the phenylalanyl-tRNA synthetase beta subunit family. Type 2 subfamily. As to quaternary structure, tetramer of two alpha and two beta subunits. Mg(2+) serves as cofactor.

Its subcellular location is the cytoplasm. It carries out the reaction tRNA(Phe) + L-phenylalanine + ATP = L-phenylalanyl-tRNA(Phe) + AMP + diphosphate + H(+). This is Phenylalanine--tRNA ligase beta subunit from Methanocorpusculum labreanum (strain ATCC 43576 / DSM 4855 / Z).